Here is a 357-residue protein sequence, read N- to C-terminus: Glutamine synthetase root isozyme 1 (357 aa).

Residues 19-99 (IIAEYIWIGG…VMCDCYTPQG (81 aa)) enclose the GS beta-grasp domain. A GS catalytic domain is found at 106-357 (KRYSAAKVFS…AETTILWNGN (252 aa)).

It belongs to the glutamine synthetase family. In terms of assembly, homooctamer. Found mainly in the cortical tissues of seedling roots, and in the root tip.

Its subcellular location is the cytoplasm. The enzyme catalyses L-glutamate + NH4(+) + ATP = L-glutamine + ADP + phosphate + H(+). Its function is as follows. Plays a role in the flow of nitrogen into nitrogenous organic compounds. The sequence is that of Glutamine synthetase root isozyme 1 (GLN6) from Zea mays (Maize).